The following is a 955-amino-acid chain: RNA polymerase-associated protein RapA (955 aa).

Positions 163–333 (EVGHRYAPRV…FARLRLLDPE (171 aa)) constitute a Helicase ATP-binding domain. 176–183 (DEVGLGKT) contacts ATP. The short motif at 279–282 (DEAH) is the DEAH box element. Residues 478-642 (RVDWLLELLL…AVRDELFELL (165 aa)) enclose the Helicase C-terminal domain.

The protein belongs to the SNF2/RAD54 helicase family. RapA subfamily. In terms of assembly, interacts with the RNAP. Has a higher affinity for the core RNAP than for the holoenzyme. Its ATPase activity is stimulated by binding to RNAP.

Transcription regulator that activates transcription by stimulating RNA polymerase (RNAP) recycling in case of stress conditions such as supercoiled DNA or high salt concentrations. Probably acts by releasing the RNAP, when it is trapped or immobilized on tightly supercoiled DNA. Does not activate transcription on linear DNA. Probably not involved in DNA repair. The polypeptide is RNA polymerase-associated protein RapA (Aeromonas salmonicida (strain A449)).